A 126-amino-acid polypeptide reads, in one-letter code: MTRIRRGYIARRRRTKIRLFASSFRGAHSRLTRTITQQKIRALVSAHRDRDRQKINFRRLWITRINAAIRERGVCYSYSRLINDLYKRQLLLNRKILAQIAISNRNCLYMISNEIIKEVSWKESTG.

This sequence belongs to the bacterial ribosomal protein bL20 family.

The protein resides in the plastid. Its subcellular location is the chloroplast. Its function is as follows. Binds directly to 23S ribosomal RNA and is necessary for the in vitro assembly process of the 50S ribosomal subunit. It is not involved in the protein synthesizing functions of that subunit. The polypeptide is Large ribosomal subunit protein bL20c (Guizotia abyssinica (Niger)).